Consider the following 36-residue polypeptide: U-limacoditoxin(7)-Dv63 (36 aa).

The signal sequence occupies residues 1–19 (MFKPRVILLITIIAVFSEF).

Belongs to the limacoditoxin-7 family. In terms of tissue distribution, expressed by the venom secretory cell of the spine. The spine is a cuticular structure containing a single large nucleated venom-secreting cell at its base. It is an independent unit capable of producing, storing and injecting venom. On the back of D.vulnerans caterpillars, spines are grouped together by 50 to 100 to form scoli, of which there are eight in D.vulnerans.

It is found in the secreted. In terms of biological role, peptide with insecticidal and antiparasitic activities. Induces irreversible paralysis in D.melanogaster when tested at high doses. It shows a moderate antiparasitic activity against the major pathogenic nematode of ruminants (H.contortus, EC(50)=41.3 uM). Does not show antimicrobial activities. Does not induce increase in intracellular calcium in mouse DRG neurons, suggesting that it does not induce pain. The polypeptide is U-limacoditoxin(7)-Dv63 (Doratifera vulnerans (Mottled cup moth)).